Consider the following 376-residue polypeptide: Serpin B6 (376 aa).

Position 1 is an N-acetylmethionine (methionine 1). Serine 151 bears the Phosphoserine mark. Lysine 195 bears the N6-acetyllysine mark.

It belongs to the serpin family. Ov-serpin subfamily. Forms a complex with the monomeric form of beta-tryptase.

It localises to the cytoplasm. Its function is as follows. Inhibitor of cathepsin G, kallikrein-8 and thrombin. May play an important role in the inner ear in the protection against leakage of lysosomal content during stress. May be involved in the regulation of serine proteinases present in the brain or extravasated from the blood. In Macaca fascicularis (Crab-eating macaque), this protein is Serpin B6 (SERPINB6).